The following is a 166-amino-acid chain: Protein SprT (166 aa).

A SprT-like domain is found at 19 to 164; that stretch reads RDALARANLK…CVRCGDTLVA (146 aa). Residue histidine 78 participates in Zn(2+) binding. Glutamate 79 is a catalytic residue. Residue histidine 82 participates in Zn(2+) binding.

This sequence belongs to the SprT family. Zn(2+) is required as a cofactor.

It is found in the cytoplasm. The sequence is that of Protein SprT from Cronobacter sakazakii (strain ATCC BAA-894) (Enterobacter sakazakii).